The chain runs to 515 residues: Envelope glycoprotein (515 aa).

The N-terminal stretch at 1-33 (MPKERRSRRRPQPIIRWVSLTLTLLALCQPIQT) is a signal peptide. Over 34–435 (WRCSLSLGNQ…LGLTAWVRET (402 aa)) the chain is Extracellular. 2 N-linked (GlcNAc...) asparagine; by host glycosylation sites follow: asparagine 129 and asparagine 203. The CXXC signature appears at 212–215 (CAIC). Intrachain disulfides connect cysteine 212-cysteine 215, cysteine 212-cysteine 392, and cysteine 384-cysteine 391. N-linked (GlcNAc...) asparagine; by host glycosylation is found at asparagine 230, asparagine 251, asparagine 256, asparagine 271, and asparagine 287. The segment at 304-324 (VAALTLGLALSVGLTGINVAV) is fusion peptide. 2 coiled-coil regions span residues 330–376 (QRLT…WLYI) and 388–420 (NEPC…DWQW). Residue asparagine 351 is glycosylated (N-linked (GlcNAc...) asparagine; by host). The segment at 365-381 (AQNRRGLDWLYIRLGFQ) is immunosuppression. The CX6CC signature appears at 384–392 (CPTINEPCC). N-linked (GlcNAc...) asparagine; by host glycosylation is present at asparagine 398. Residues 436 to 456 (IHSVLSLFLLALFLLFLAPCL) form a helical membrane-spanning segment. Cysteine 455 carries the S-palmitoyl cysteine; by host lipid modification. The Cytoplasmic segment spans residues 457-515 (IKCLTSRLLKLLRQAPHFPEISFPPKPDSDYQALLPSAPEIYSHLSPTKPDYINLRPCP).

As to quaternary structure, the mature envelope protein (Env) consists of a trimer of SU-TM heterodimers attached by a labile interchain disulfide bond. Specific enzymatic cleavages in vivo yield mature proteins. Envelope glycoproteins are synthesized as an inactive precursor that is N-glycosylated and processed likely by host cell furin or by a furin-like protease in the Golgi to yield the mature SU and TM proteins. The cleavage site between SU and TM requires the minimal sequence [KR]-X-[KR]-R. In terms of processing, the CXXC motif is highly conserved across a broad range of retroviral envelope proteins. It is thought to participate in the formation of a labile disulfide bond possibly with the CX6CC motif present in the transmembrane protein. Isomerization of the intersubunit disulfide bond to an SU intrachain disulfide bond is thought to occur upon receptor recognition in order to allow membrane fusion. Post-translationally, the transmembrane protein is palmitoylated.

It localises to the virion membrane. The protein localises to the host cell membrane. Its function is as follows. The surface protein (SU) attaches the virus to the host cell by binding to its receptor. This interaction triggers the refolding of the transmembrane protein (TM) and is thought to activate its fusogenic potential by unmasking its fusion peptide. Fusion occurs at the host cell plasma membrane. In terms of biological role, the transmembrane protein (TM) acts as a class I viral fusion protein. Under the current model, the protein has at least 3 conformational states: pre-fusion native state, pre-hairpin intermediate state, and post-fusion hairpin state. During viral and target cell membrane fusion, the coiled coil regions (heptad repeats) assume a trimer-of-hairpins structure, positioning the fusion peptide in close proximity to the C-terminal region of the ectodomain. The formation of this structure appears to drive apposition and subsequent fusion of viral and target cell membranes. Membranes fusion leads to delivery of the nucleocapsid into the cytoplasm. The chain is Envelope glycoprotein (env) from Bovine leukemia virus (isolate Belgium LB59) (BLV).